The chain runs to 431 residues: uncharacterized protein (431 aa).

Disordered stretches follow at residues 17-66 (VDPE…GQQA) and 81-415 (GSVT…ALPR). A compositionally biased stretch (basic and acidic residues) spans 91 to 106 (DKADREPAARPRDPRS). Residues 173-195 (TYRRRRPTAATPSRKKKARRGPK) show a composition bias toward basic residues. A compositionally biased stretch (low complexity) spans 235-244 (RTPGPVHSAA). Residues 299 to 312 (RMGGSSGGRGGTPG) are compositionally biased toward gly residues. Positions 317 to 342 (RAAPGARPTAPDGAPGRWDGPADGPA) are enriched in low complexity. The span at 343–360 (PGLGRGGWGVGREAGGSG) shows a compositional bias: gly residues.

This is an uncharacterized protein from Homo sapiens (Human).